Consider the following 168-residue polypeptide: Small ribosomal subunit protein uS5 (168 aa).

The 64-residue stretch at 17 to 80 (IEDQLVAVNR…EDGKKKMINV (64 aa)) folds into the S5 DRBM domain.

This sequence belongs to the universal ribosomal protein uS5 family. As to quaternary structure, part of the 30S ribosomal subunit. Contacts proteins S4 and S8.

Functionally, with S4 and S12 plays an important role in translational accuracy. Its function is as follows. Located at the back of the 30S subunit body where it stabilizes the conformation of the head with respect to the body. The protein is Small ribosomal subunit protein uS5 of Lactobacillus acidophilus (strain ATCC 700396 / NCK56 / N2 / NCFM).